The chain runs to 334 residues: MKIAVDGMGGDFAPKEVVAGCVDALNENKDLHIVITGKEELIKKELEGHNYDEDRIEVLDAREVISTNDSPVMAIRRKKDSSLNKGLQLVKEKKVEGIISAGSTGAFMAGSLFIVGRIKGIDRPALAPIMPGKNAPFMVIDVGANAECKPQNLLQFALMGKIYFEKILNVKNPTIGLVNIGVEEEKGTELTKEAYKLLKNSGLNFIGNVEPRDIPTGDVNILVCDGFTGNTILKTYEGVAQNIFEILKAEIMSSFQGKIGGALLKPSFKNIKKKFNYKEYGGAAFIGVEGICVKAHGSSDRKAFKNAIKQCINFHKGNIINNIKEELVNIETLH.

Belongs to the PlsX family. Homodimer. Probably interacts with PlsY.

Its subcellular location is the cytoplasm. It catalyses the reaction a fatty acyl-[ACP] + phosphate = an acyl phosphate + holo-[ACP]. Its pathway is lipid metabolism; phospholipid metabolism. In terms of biological role, catalyzes the reversible formation of acyl-phosphate (acyl-PO(4)) from acyl-[acyl-carrier-protein] (acyl-ACP). This enzyme utilizes acyl-ACP as fatty acyl donor, but not acyl-CoA. The polypeptide is Phosphate acyltransferase (Clostridium tetani (strain Massachusetts / E88)).